Here is a 496-residue protein sequence, read N- to C-terminus: Beta-N-acetylhexosaminidase (496 aa).

Glutamate 298 acts as the Proton donor in catalysis.

This sequence belongs to the glycosyl hydrolase 20 family.

The catalysed reaction is Hydrolysis of terminal non-reducing N-acetyl-D-hexosamine residues in N-acetyl-beta-D-hexosaminides.. Its pathway is glycan degradation; chitin degradation. Catalyzes the cleavage of beta-N-acetylglucosaminides and beta-N-acetylgalactosaminides. Also catalyzes the hydrolysis of N-acetylchitooligomers. May be involved in chitin degradation. It is not able to cleave beta-glucosides. This is Beta-N-acetylhexosaminidase (hex20) from Cellulomonas fimi.